A 348-amino-acid polypeptide reads, in one-letter code: MFIVAVLMLAFLIFVHELGHFTIARICGVKVEVFSIGFGKKLCFFKLFGTQFALSLIPLGGYVKLKGMDKEENGMNETTDDSYAQKSPFQKLWILFGGAFFNFLFAILVYFFLALGGEKVLLPVIGDLDKNALEAGLLKGDKILSINHKKIASFREIRSVVARARGELVLEIERNHQVLEKRLTPKIVAVISDSNDPNEMIRYKAIGIKPDMQKMGVVSYSLFQAFEKALSRFKEGVVLIVDSLRRLIMGSSSVKELSGVVGIVGALSHANSLSMLLLFGAFLSINLGILNLLPIPALDGAQMLGVVFKNIFHITLPTPIQNALWLAGVGFLVFIMFLGLFNDLTRLL.

H16 contacts Zn(2+). Residue E17 is part of the active site. Zn(2+) is bound at residue H20. Helical transmembrane passes span 43–63 (CFFKLFGTQFALSLIPLGGYV), 93–113 (WILFGGAFFNFLFAILVYFFL), 247–267 (LIMGSSSVKELSGVVGIVGAL), 275–295 (MLLLFGAFLSINLGILNLLPI), and 324–344 (LWLAGVGFLVFIMFLGLFNDL). Positions 106–175 (AILVYFFLAL…GELVLEIERN (70 aa)) constitute a PDZ domain.

Belongs to the peptidase M50B family. It depends on Zn(2+) as a cofactor.

It is found in the cell inner membrane. The protein is Putative zinc metalloprotease HP_0258 of Helicobacter pylori (strain ATCC 700392 / 26695) (Campylobacter pylori).